Reading from the N-terminus, the 1966-residue chain is Alpha-protein kinase 2 (1966 aa).

Disordered regions lie at residues Asn-23–Leu-65, Ala-211–Lys-231, Leu-1211–Asp-1259, Ser-1303–Gly-1365, Lys-1386–Lys-1423, and Asn-1437–Pro-1463. Polar residues predominate over residues Ala-211 to Asn-227. The segment covering Leu-1211–Asp-1221 has biased composition (low complexity). Basic and acidic residues predominate over residues Ser-1325–Gln-1342. The span at Gln-1388–Gln-1397 shows a compositional bias: basic residues. Basic and acidic residues predominate over residues Pro-1401–Gln-1417. Residues Pro-1577–Ser-1659 enclose the Ig-like domain. Cys-1599 and Cys-1649 form a disulfide bridge. The Alpha-type protein kinase domain maps to Lys-1702–Leu-1934. The tract at residues Lys-1937–Ser-1966 is disordered.

This sequence belongs to the protein kinase superfamily. Alpha-type protein kinase family. ALPK subfamily. In terms of tissue distribution, expressed in developing cardiac tissue.

It localises to the basolateral cell membrane. The catalysed reaction is L-seryl-[protein] + ATP = O-phospho-L-seryl-[protein] + ADP + H(+). It catalyses the reaction L-threonyl-[protein] + ATP = O-phospho-L-threonyl-[protein] + ADP + H(+). Protein kinase that recognizes phosphorylation sites in which the surrounding peptides have an alpha-helical conformation. Regulates cardiac development and cardiomyocyte differentiation by negatively regulating Wnt/beta-catenin signaling. The sequence is that of Alpha-protein kinase 2 (alpk2) from Danio rerio (Zebrafish).